The primary structure comprises 149 residues: Large ribosomal subunit protein bL17 (149 aa).

Belongs to the bacterial ribosomal protein bL17 family. As to quaternary structure, part of the 50S ribosomal subunit. Contacts protein L32.

This is Large ribosomal subunit protein bL17 from Kosmotoga olearia (strain ATCC BAA-1733 / DSM 21960 / TBF 19.5.1).